Here is a 176-residue protein sequence, read N- to C-terminus: Salivary antigen 1 (176 aa).

The signal sequence occupies residues 1-18; it reads MNYCFLVFLVYLVFAVNG.

Its subcellular location is the secreted. In Ctenocephalides felis (Cat flea), this protein is Salivary antigen 1.